A 438-amino-acid polypeptide reads, in one-letter code: Trigger factor (438 aa).

A PPIase FKBP-type domain is found at 163 to 248; sequence GEIAVLDFAA…VHAVKERKLP (86 aa).

Belongs to the FKBP-type PPIase family. Tig subfamily.

It localises to the cytoplasm. It catalyses the reaction [protein]-peptidylproline (omega=180) = [protein]-peptidylproline (omega=0). Functionally, involved in protein export. Acts as a chaperone by maintaining the newly synthesized protein in an open conformation. Functions as a peptidyl-prolyl cis-trans isomerase. The polypeptide is Trigger factor (Oleidesulfovibrio alaskensis (strain ATCC BAA-1058 / DSM 17464 / G20) (Desulfovibrio alaskensis)).